The following is a 419-amino-acid chain: Gamma-glutamyl phosphate reductase (419 aa).

Belongs to the gamma-glutamyl phosphate reductase family.

The protein resides in the cytoplasm. The enzyme catalyses L-glutamate 5-semialdehyde + phosphate + NADP(+) = L-glutamyl 5-phosphate + NADPH + H(+). It participates in amino-acid biosynthesis; L-proline biosynthesis; L-glutamate 5-semialdehyde from L-glutamate: step 2/2. Its function is as follows. Catalyzes the NADPH-dependent reduction of L-glutamate 5-phosphate into L-glutamate 5-semialdehyde and phosphate. The product spontaneously undergoes cyclization to form 1-pyrroline-5-carboxylate. This chain is Gamma-glutamyl phosphate reductase, found in Bordetella bronchiseptica (strain ATCC BAA-588 / NCTC 13252 / RB50) (Alcaligenes bronchisepticus).